The following is a 326-amino-acid chain: Probable GTP 3',8-cyclase (326 aa).

In terms of domain architecture, Radical SAM core spans 6–235; it reads LYGRPVLSLR…NRPRYIIRTQ (230 aa). Arg-15 contacts GTP. Positions 22, 26, and 29 each coordinate [4Fe-4S] cluster. Lys-62 contributes to the GTP binding site. An S-adenosyl-L-methionine-binding site is contributed by Gly-66. Position 92 (Thr-92) interacts with GTP. Residue Ser-116 participates in S-adenosyl-L-methionine binding. Lys-153 provides a ligand contact to GTP. Residues Cys-253 and Cys-256 each contribute to the [4Fe-4S] cluster site. 258–260 serves as a coordination point for GTP; the sequence is RLR. Cys-270 contacts [4Fe-4S] cluster.

This sequence belongs to the radical SAM superfamily. MoaA family. [4Fe-4S] cluster is required as a cofactor.

The enzyme catalyses GTP + AH2 + S-adenosyl-L-methionine = (8S)-3',8-cyclo-7,8-dihydroguanosine 5'-triphosphate + 5'-deoxyadenosine + L-methionine + A + H(+). It functions in the pathway cofactor biosynthesis; molybdopterin biosynthesis. Functionally, catalyzes the cyclization of GTP to (8S)-3',8-cyclo-7,8-dihydroguanosine 5'-triphosphate. This chain is Probable GTP 3',8-cyclase, found in Thermoplasma volcanium (strain ATCC 51530 / DSM 4299 / JCM 9571 / NBRC 15438 / GSS1).